A 227-amino-acid polypeptide reads, in one-letter code: Cytochrome c oxidase subunit 2 (227 aa).

Residues 1–14 (MAYPVQLGFQDAAS) lie on the Mitochondrial intermembrane side of the membrane. Residues 15 to 45 (PIMEELLYFHDHTLMIMFLISSLVLYIISLM) traverse the membrane as a helical segment. Residues 46-59 (LTTELIHTSTMDAQ) lie on the Mitochondrial matrix side of the membrane. A helical transmembrane segment spans residues 60 to 87 (EVETVWTILPAVILILIALPSLRILYMM). Topologically, residues 88–227 (DEISTPSLTL…HFEEWLLSML (140 aa)) are mitochondrial intermembrane. 6 residues coordinate Cu cation: histidine 161, cysteine 196, glutamate 198, cysteine 200, histidine 204, and methionine 207. Glutamate 198 provides a ligand contact to Mg(2+).

Belongs to the cytochrome c oxidase subunit 2 family. Component of the cytochrome c oxidase (complex IV, CIV), a multisubunit enzyme composed of 14 subunits. The complex is composed of a catalytic core of 3 subunits MT-CO1, MT-CO2 and MT-CO3, encoded in the mitochondrial DNA, and 11 supernumerary subunits COX4I, COX5A, COX5B, COX6A, COX6B, COX6C, COX7A, COX7B, COX7C, COX8 and NDUFA4, which are encoded in the nuclear genome. The complex exists as a monomer or a dimer and forms supercomplexes (SCs) in the inner mitochondrial membrane with NADH-ubiquinone oxidoreductase (complex I, CI) and ubiquinol-cytochrome c oxidoreductase (cytochrome b-c1 complex, complex III, CIII), resulting in different assemblies (supercomplex SCI(1)III(2)IV(1) and megacomplex MCI(2)III(2)IV(2)). Found in a complex with TMEM177, COA6, COX18, COX20, SCO1 and SCO2. Interacts with TMEM177 in a COX20-dependent manner. Interacts with COX20. Interacts with COX16. Cu cation serves as cofactor.

It localises to the mitochondrion inner membrane. It carries out the reaction 4 Fe(II)-[cytochrome c] + O2 + 8 H(+)(in) = 4 Fe(III)-[cytochrome c] + 2 H2O + 4 H(+)(out). Functionally, component of the cytochrome c oxidase, the last enzyme in the mitochondrial electron transport chain which drives oxidative phosphorylation. The respiratory chain contains 3 multisubunit complexes succinate dehydrogenase (complex II, CII), ubiquinol-cytochrome c oxidoreductase (cytochrome b-c1 complex, complex III, CIII) and cytochrome c oxidase (complex IV, CIV), that cooperate to transfer electrons derived from NADH and succinate to molecular oxygen, creating an electrochemical gradient over the inner membrane that drives transmembrane transport and the ATP synthase. Cytochrome c oxidase is the component of the respiratory chain that catalyzes the reduction of oxygen to water. Electrons originating from reduced cytochrome c in the intermembrane space (IMS) are transferred via the dinuclear copper A center (CU(A)) of subunit 2 and heme A of subunit 1 to the active site in subunit 1, a binuclear center (BNC) formed by heme A3 and copper B (CU(B)). The BNC reduces molecular oxygen to 2 water molecules using 4 electrons from cytochrome c in the IMS and 4 protons from the mitochondrial matrix. In Eulemur macaco (Black lemur), this protein is Cytochrome c oxidase subunit 2 (MT-CO2).